The following is a 395-amino-acid chain: Phosphopentomutase (395 aa).

Mn(2+) contacts are provided by Asp-16, Asp-289, His-294, Asp-330, His-331, and His-342.

The protein belongs to the phosphopentomutase family. Mn(2+) serves as cofactor.

The protein localises to the cytoplasm. The enzyme catalyses 2-deoxy-alpha-D-ribose 1-phosphate = 2-deoxy-D-ribose 5-phosphate. It catalyses the reaction alpha-D-ribose 1-phosphate = D-ribose 5-phosphate. The protein operates within carbohydrate degradation; 2-deoxy-D-ribose 1-phosphate degradation; D-glyceraldehyde 3-phosphate and acetaldehyde from 2-deoxy-alpha-D-ribose 1-phosphate: step 1/2. Isomerase that catalyzes the conversion of deoxy-ribose 1-phosphate (dRib-1-P) and ribose 1-phosphate (Rib-1-P) to deoxy-ribose 5-phosphate (dRib-5-P) and ribose 5-phosphate (Rib-5-P), respectively. This chain is Phosphopentomutase, found in Geobacillus kaustophilus (strain HTA426).